We begin with the raw amino-acid sequence, 265 residues long: MLIWSPKGRAAAGVVASVLFIVFFFLPLAVILMSSLSQQWNGILPSGFTLNHFVNALHGAAWDALLASLTIGFCASLFALLCGVWAALALRQYGVKTQKWLSMVFYLPSAIPSVSVGLGILVAFSQGPLQMNGTLWIVLTAHFVLISAFTFSNVSTGLARISADIENVASSLGASPWYRLRHVTLPLLMPWMVSALALSLSLSMGELGATVMIYPPGWTTLPVAIFSLTDRGNIADGAALTIVLVAITLLLMMKLERIAKRLGQK.

Helical transmembrane passes span 13 to 33 (GVVASVLFIVFFFLPLAVILM), 69 to 89 (LTIGFCASLFALLCGVWAALA), 104 to 124 (VFYLPSAIPSVSVGLGILVAF), 131 to 151 (MNGTLWIVLTAHFVLISAFTF), 185 to 205 (LPLLMPWMVSALALSLSLSMG), and 233 to 253 (NIADGAALTIVLVAITLLLMM). Residues 65 to 253 (LLASLTIGFC…LVAITLLLMM (189 aa)) enclose the ABC transmembrane type-1 domain.

It belongs to the binding-protein-dependent transport system permease family.

It is found in the cell inner membrane. Functionally, probably part of the PhnSTUV complex (TC 3.A.1.11.5) involved in 2-aminoethylphosphonate import. Probably responsible for the translocation of the substrate across the membrane. This is Putative 2-aminoethylphosphonate transport system permease protein PhnV (phnV) from Salmonella paratyphi A (strain ATCC 9150 / SARB42).